We begin with the raw amino-acid sequence, 364 residues long: Heat-inducible transcription repressor HrcA (364 aa).

It belongs to the HrcA family.

Its function is as follows. Negative regulator of class I heat shock genes (grpE-dnaK-dnaJ and groELS operons). Prevents heat-shock induction of these operons. The sequence is that of Heat-inducible transcription repressor HrcA from Cyanothece sp. (strain PCC 7425 / ATCC 29141).